Reading from the N-terminus, the 279-residue chain is tRNA uridine(34) hydroxylase (279 aa).

The 96-residue stretch at 126–221 (TKPGMHVIDT…YLQSVKGADS (96 aa)) folds into the Rhodanese domain. Residue Cys181 is the Cysteine persulfide intermediate of the active site.

The protein belongs to the TrhO family.

The catalysed reaction is uridine(34) in tRNA + AH2 + O2 = 5-hydroxyuridine(34) in tRNA + A + H2O. Catalyzes oxygen-dependent 5-hydroxyuridine (ho5U) modification at position 34 in tRNAs. This chain is tRNA uridine(34) hydroxylase, found in Anaplasma phagocytophilum (strain HZ).